The sequence spans 312 residues: Putative clathrin assembly protein At2g01920 (312 aa).

Residues 21 to 152 enclose the ENTH domain; that stretch reads LITATDEKFT…ILYYNKNMIR (132 aa).

The protein localises to the membrane. The protein resides in the clathrin-coated pit. It is found in the golgi apparatus. It localises to the cytoplasmic vesicle. Its subcellular location is the clathrin-coated vesicle. The sequence is that of Putative clathrin assembly protein At2g01920 from Arabidopsis thaliana (Mouse-ear cress).